The sequence spans 413 residues: Probable N-acetyltransferase HLS1-like (413 aa).

Positions 5-187 (VEVREYDPSK…VNPVYAHRVN (183 aa)) constitute an N-acetyltransferase domain.

Belongs to the acetyltransferase family.

The protein is Probable N-acetyltransferase HLS1-like of Arabidopsis thaliana (Mouse-ear cress).